The following is a 208-amino-acid chain: Methylthioribulose-1-phosphate dehydratase (208 aa).

Residues His-101 and His-103 each contribute to the Zn(2+) site.

Belongs to the aldolase class II family. MtnB subfamily. Zn(2+) is required as a cofactor.

It carries out the reaction 5-(methylsulfanyl)-D-ribulose 1-phosphate = 5-methylsulfanyl-2,3-dioxopentyl phosphate + H2O. The protein operates within amino-acid biosynthesis; L-methionine biosynthesis via salvage pathway; L-methionine from S-methyl-5-thio-alpha-D-ribose 1-phosphate: step 2/6. Its function is as follows. Catalyzes the dehydration of methylthioribulose-1-phosphate (MTRu-1-P) into 2,3-diketo-5-methylthiopentyl-1-phosphate (DK-MTP-1-P). This chain is Methylthioribulose-1-phosphate dehydratase, found in Gluconobacter oxydans (strain 621H) (Gluconobacter suboxydans).